We begin with the raw amino-acid sequence, 449 residues long: Tubulin beta chain (449 aa).

Glutamine 11, glutamate 69, serine 138, glycine 142, threonine 143, glycine 144, asparagine 204, and asparagine 226 together coordinate GTP. Glutamate 69 lines the Mg(2+) pocket. A disordered region spans residues 426–449 (QDATAEEEGEFDEEEGVMDAEGAA). Acidic residues predominate over residues 429 to 443 (TAEEEGEFDEEEGVM).

This sequence belongs to the tubulin family. Dimer of alpha and beta chains. A typical microtubule is a hollow water-filled tube with an outer diameter of 25 nm and an inner diameter of 15 nM. Alpha-beta heterodimers associate head-to-tail to form protofilaments running lengthwise along the microtubule wall with the beta-tubulin subunit facing the microtubule plus end conferring a structural polarity. Microtubules usually have 13 protofilaments but different protofilament numbers can be found in some organisms and specialized cells. Mg(2+) serves as cofactor.

It is found in the cytoplasm. It localises to the cytoskeleton. Functionally, tubulin is the major constituent of microtubules, a cylinder consisting of laterally associated linear protofilaments composed of alpha- and beta-tubulin heterodimers. Microtubules grow by the addition of GTP-tubulin dimers to the microtubule end, where a stabilizing cap forms. Below the cap, tubulin dimers are in GDP-bound state, owing to GTPase activity of alpha-tubulin. This chain is Tubulin beta chain, found in Eimeria tenella (Coccidian parasite).